We begin with the raw amino-acid sequence, 158 residues long: uncharacterized protein (158 aa).

The region spanning 12–73 (LDEIDRAILR…LINPFKAGYE (62 aa)) is the HTH asnC-type domain. Residues 31 to 50 (YSEISRRINVPESTVRARVN) constitute a DNA-binding region (H-T-H motif).

This is an uncharacterized protein from Pyrococcus abyssi (strain GE5 / Orsay).